A 209-amino-acid chain; its full sequence is Large ribosomal subunit protein uL3 (209 aa).

Residues 127-152 form a disordered region; that stretch reads SGGPSSHGSKFHRHLGSTGQAATPSR. Polar residues predominate over residues 143–152; it reads STGQAATPSR.

It belongs to the universal ribosomal protein uL3 family. In terms of assembly, part of the 50S ribosomal subunit. Forms a cluster with proteins L14 and L19.

Its function is as follows. One of the primary rRNA binding proteins, it binds directly near the 3'-end of the 23S rRNA, where it nucleates assembly of the 50S subunit. The polypeptide is Large ribosomal subunit protein uL3 (Borrelia hermsii (strain HS1 / DAH)).